The chain runs to 31 residues: Cuticle protein 54 (31 aa).

2 repeat units span residues 7-10 and 13-17.

Functionally, component of the cuticle of migratory locust which contains more than 100 different structural proteins. The chain is Cuticle protein 54 from Locusta migratoria (Migratory locust).